We begin with the raw amino-acid sequence, 554 residues long: Asparagine synthetase B [glutamine-hydrolyzing] (554 aa).

Cys2 functions as the For GATase activity in the catalytic mechanism. The Glutamine amidotransferase type-2 domain maps to 2-186 (CSIFGVFDIK…AGSYLWSQDG (185 aa)). Residues 50-54 (RLSIV), 75-77 (NGE), and Asp99 each bind L-glutamine. ATP contacts are provided by residues Leu233, Val273, and 347 to 348 (SG).

This sequence belongs to the asparagine synthetase family. As to quaternary structure, homodimer.

The catalysed reaction is L-aspartate + L-glutamine + ATP + H2O = L-asparagine + L-glutamate + AMP + diphosphate + H(+). It functions in the pathway amino-acid biosynthesis; L-asparagine biosynthesis; L-asparagine from L-aspartate (L-Gln route): step 1/1. Its activity is regulated as follows. Glutamine-dependent asparagine synthesis activity can be inhibited by aspartic acid analogs (such as a sulfinate derivative and (2S,3R)-2-amino-3-methylsuccinate) in vitro; the inhibition is competitive with respect to aspartate. Its function is as follows. Catalyzes the ATP-dependent conversion of aspartate into asparagine, using glutamine as a source of nitrogen. Can also use ammonia as the nitrogen source in vitro, albeit with lower efficiency. As nucleotide substrates, ATP and dATP are utilized at a similar rate in both the glutamine- and ammonia-dependent reactions, whereas GTP utilization is only 15% that of ATP, and CTP, UTP, ITP and XTP are very poor or not substrates. Also exhibits glutaminase activity. This chain is Asparagine synthetase B [glutamine-hydrolyzing] (asnB), found in Escherichia coli (strain K12).